Consider the following 882-residue polypeptide: MWFVFRPAAIPALLLTLGVSALSPLRPLVSTAGQHEVIPGWYLQSERHVSSSIFSLSFPGADVSSWYRMGPRGTVMAGLLENGVYNETHLFFSDNFKSLPDADFRDVSWLYREEFTLQPGSGQHFTLHTHGISSRGDIYLNGHRVASKDVQAGSYAGYQYDVTKHVLKGGNCLLIKAYPTNYLRDLALGFVDWNPYPPDNGTGIWRHVELSQSGPIRLSSPRVTTDFVPGVRVNDTNLTVKTDVHNIGQETIRGSIKGFIEGAQNQRQPISAPFTLKPGEQQTIEMNTTIQNPSVWWPASWGDQPLYTARISAFVGKIKSDGPKRRKFGIRHIESRVNDQDTVEFKVNGKPFFVMGAGYSSDIFLRFTVERITTIFQYVLDMGMNTVRLEGKQEHPELYDIADKMGIMIISGWECCDHWEGWKYNTEGFGQPWTDVDYPIANSSMLHEARMMQTHPSILAFLIGSDYWPNDQATNIYVDALRRMDWNAAIISSAAKRGFPKLLGPSGMKMDGPYDWVPPSYWFGDRLGAAGAGGFGSELGSGVGTPEIRSLKKFLSEEDMKDLWTKPNKVLYHMSAGVSQFRDRSIYNKALYARYGKPNSLDDYSLKAQLMDYEATRSEYEAYAAYKSHSNPTTGLIYWMLNPAWPNLHWALFDYYLKPMASYFGTKTGARIEHAIYDYREQAVYLINHSNSRSGARSVTVDLINIDGKSLSHSTMKADTTPLMSQKLSKVSGLDKNRDVSFLRLILKDDAGKVLSRNVYWLPQREDVLDWGNSTWYHTPVTEYADLTPLSKLRKADVRVDINIQGRTKTRVSLQNKSNHPAFFIRLNLLDKASGDEVTPVFWEDNYVTLWPHERIELGVTYPQTHRVELEVSGYNVEKKMV.

The signal sequence occupies residues M1–A21. Positions L22–T31 are excised as a propeptide. N86, N200, N234, N237, N287, and N442 each carry an N-linked (GlcNAc...) asparagine glycan. The active-site Proton donor is D466. Residue E538 is the Nucleophile of the active site. N-linked (GlcNAc...) asparagine glycosylation is found at N688, N773, and N816.

This sequence belongs to the glycosyl hydrolase 2 family. As to quaternary structure, monomer.

The protein resides in the secreted. It catalyses the reaction Hydrolysis of chitosan or chitosan oligosaccharides to remove successive D-glucosamine residues from the non-reducing termini.. Hydrolyzes chitosan and chitooligosaccharides with retention of anomeric configuration. This Arthroderma benhamiae (strain ATCC MYA-4681 / CBS 112371) (Trichophyton mentagrophytes) protein is Exo-beta-D-glucosaminidase ARB_07888.